Consider the following 769-residue polypeptide: P-selectin (769 aa).

The signal sequence occupies residues 1-32 (MASCPKAIWSWRFQRVVFRSVQLLCFSILIFE). The Extracellular segment spans residues 33–717 (LMTQKEVSAW…QEALTYIGGA (685 aa)). 2 N-linked (GlcNAc...) asparagine glycosylation sites follow: Asn54 and Asn80. The region spanning 58–158 (AFCQKYYTDL…PCGKRKRALC (101 aa)) is the C-type lectin domain. 21 cysteine pairs are disulfide-bonded: Cys60–Cys158, Cys131–Cys150, Cys163–Cys174, Cys168–Cys183, Cys185–Cys194, Cys200–Cys244, Cys230–Cys257, Cys262–Cys306, Cys292–Cys319, Cys324–Cys368, Cys354–Cys381, Cys386–Cys430, Cys416–Cys443, Cys448–Cys492, Cys478–Cys505, Cys510–Cys554, Cys540–Cys567, Cys581–Cys625, Cys611–Cys638, Cys643–Cys687, and Cys673–Cys700. Glu121, Asn123, and Asn124 together coordinate Ca(2+). Asn123 contacts a carbohydrate. 2 residues coordinate a carbohydrate: Glu133 and Asn146. The Ca(2+) site is built by Asn146 and Asp147. The EGF-like domain occupies 159-195 (YRASCQDMSCSKQGECIETIGNYTCSCYPGFYGPECE). A glycan (N-linked (GlcNAc...) asparagine) is linked at Asn180. Sushi domains follow at residues 198 to 259 (RECG…QCVA), 260 to 321 (VQCP…VCKA), 322 to 383 (IACE…VCQA), 384 to 445 (LQCQ…ECQA), 446 to 507 (VTCA…TCEA), 508 to 569 (SKCP…SCKV), 579 to 640 (LRCP…TCRA), and 641 to 702 (VKCS…TCQA). Asn212 and Asn219 each carry an N-linked (GlcNAc...) asparagine glycan. N-linked (GlcNAc...) asparagine glycosylation occurs at Asn347. N-linked (GlcNAc...) asparagine glycosylation occurs at Asn398. An N-linked (GlcNAc...) asparagine glycan is attached at Asn604. Residues Asn655, Asn662, and Asn680 are each glycosylated (N-linked (GlcNAc...) asparagine). Residues 718–734 (AAGTTGLVTSSILLALL) form a helical membrane-spanning segment. Topologically, residues 735 to 769 (RRRRRQKDDGKSPLNPQSHLGTYGVFTNAAFDPSP) are cytoplasmic. Positions 740–769 (QKDDGKSPLNPQSHLGTYGVFTNAAFDPSP) are disordered. The short motif at 757 to 760 (YGVF) is the Endocytosis signal element. The segment at 760–769 (FTNAAFDPSP) is interaction with SNX17.

Belongs to the selectin/LECAM family. As to quaternary structure, interacts with SNX17. Interacts with SELPLG/PSGL1 and PODXL2 and mediates neutrophil adhesion and leukocyte rolling. This interaction requires the sialyl-Lewis X epitope of SELPLG and PODXL2, and specific tyrosine sulfation on SELPLG. Interacts (via C-type lectin domain) with alpha-IIb/beta3 integrin ITGA2B:ITGB3 and alpha-V/beta-3 integrin ITGAV:ITGB3. Interacts with alpha5/beta1 integrin ITGA5:ITGB1 and alpha4/beta1 integrin ITGA4:ITGB.

The protein localises to the cell membrane. Its function is as follows. Ca(2+)-dependent receptor for myeloid cells that binds to carbohydrates on neutrophils and monocytes. Mediates the interaction of activated endothelial cells or platelets with leukocytes. The ligand recognized is sialyl-Lewis X. Mediates rapid rolling of leukocyte rolling over vascular surfaces during the initial steps in inflammation through interaction with SELPLG. Mediates cell-cell interactions and cell adhesion via the interaction with integrin alpha-IIb/beta3 (ITGA2B:ITGB3) and integrin alpha-V/beta-3 (ITGAV:ITGB3). In Ovis aries (Sheep), this protein is P-selectin (SELP).